Reading from the N-terminus, the 372-residue chain is tRNA-specific 2-thiouridylase MnmA (372 aa).

Residues 13-20 (GMSGGVDS) and methionine 39 each bind ATP. The interaction with target base in tRNA stretch occupies residues 99-101 (NPD). Cysteine 104 serves as the catalytic Nucleophile. A disulfide bridge links cysteine 104 with cysteine 200. Glycine 128 provides a ligand contact to ATP. An interaction with tRNA region spans residues 150 to 152 (KDQ). Cysteine 200 serves as the catalytic Cysteine persulfide intermediate. Residues 310–311 (RY) are interaction with tRNA.

Belongs to the MnmA/TRMU family.

The protein localises to the cytoplasm. It carries out the reaction S-sulfanyl-L-cysteinyl-[protein] + uridine(34) in tRNA + AH2 + ATP = 2-thiouridine(34) in tRNA + L-cysteinyl-[protein] + A + AMP + diphosphate + H(+). In terms of biological role, catalyzes the 2-thiolation of uridine at the wobble position (U34) of tRNA, leading to the formation of s(2)U34. This Bacillus pumilus (strain SAFR-032) protein is tRNA-specific 2-thiouridylase MnmA.